The chain runs to 689 residues: Glycine--tRNA ligase beta subunit (689 aa).

The protein belongs to the class-II aminoacyl-tRNA synthetase family. Tetramer of two alpha and two beta subunits.

It is found in the cytoplasm. It catalyses the reaction tRNA(Gly) + glycine + ATP = glycyl-tRNA(Gly) + AMP + diphosphate. The sequence is that of Glycine--tRNA ligase beta subunit from Photobacterium profundum (strain SS9).